We begin with the raw amino-acid sequence, 459 residues long: ATP synthase subunit beta (459 aa).

148–155 (GGAGVGKT) lines the ATP pocket.

Belongs to the ATPase alpha/beta chains family. F-type ATPases have 2 components, CF(1) - the catalytic core - and CF(0) - the membrane proton channel. CF(1) has five subunits: alpha(3), beta(3), gamma(1), delta(1), epsilon(1). CF(0) has three main subunits: a(1), b(2) and c(9-12). The alpha and beta chains form an alternating ring which encloses part of the gamma chain. CF(1) is attached to CF(0) by a central stalk formed by the gamma and epsilon chains, while a peripheral stalk is formed by the delta and b chains.

The protein resides in the cell inner membrane. It carries out the reaction ATP + H2O + 4 H(+)(in) = ADP + phosphate + 5 H(+)(out). Functionally, produces ATP from ADP in the presence of a proton gradient across the membrane. The catalytic sites are hosted primarily by the beta subunits. The chain is ATP synthase subunit beta from Vesicomyosocius okutanii subsp. Calyptogena okutanii (strain HA).